The following is a 566-amino-acid chain: Chondroitin sulfate proteoglycan 5 (566 aa).

An N-terminal signal peptide occupies residues 1–30 (MGRAGGGGPDWGPPPVLLLLGVTLVLTAGA). Topologically, residues 31-423 (VPARETGSAI…SIITDFQVMC (393 aa)) are extracellular. O-linked (Xyl...) (chondroitin sulfate) serine glycosylation occurs at S38. A disordered region spans residues 56–93 (ANDTREEAGLPAAGEDETSWTERGSEMAAVGPGVGPEE). Residue N57 is glycosylated (N-linked (GlcNAc...) asparagine). A glycan (O-linked (GalNAc...) threonine) is linked at T76. S123 carries O-linked (Xyl...) (chondroitin sulfate) serine glycosylation. T132 carries O-linked (GalNAc...) threonine glycosylation. 3 disordered regions span residues 137-173 (DEALGSSTMPPAIPEATETSGPPSPAVHDKPSVGPEL), 218-249 (DSEGRGADMGSFPGSPGTSENHPDTEGETPSW), and 263-327 (ESDF…PPQH). A glycan (O-linked (GalNAc...) serine) is linked at S143. O-linked (GalNAc...) threonine glycans are attached at residues T144, T153, and T155. S156 and S160 each carry an O-linked (GalNAc...) serine glycan. The span at 163–173 (VHDKPSVGPEL) shows a compositional bias: basic and acidic residues. An O-linked (GalNAc...) threonine glycan is attached at T235. Positions 265–301 (DFYPTTSFYDDLEEEEEEEEDKDTVGGGDLEDENDLL) are interaction with TNC and TNR. A compositionally biased stretch (acidic residues) spans 274–286 (DDLEEEEEEEEDK). N-linked (GlcNAc...) asparagine glycosylation is found at N355 and N367. The 43-residue stretch at 371–413 (RSVCDLFPSYCHNGGQCYLVENIGAFCRCNTQDYIWHKGMRCE) folds into the EGF-like domain. Intrachain disulfides connect C374–C387, C381–C397, and C399–C412. Phosphoserine occurs at positions 394 and 396. A Phosphothreonine modification is found at C397. Residues 424-444 (VAVGSAALVLLLLFMMTVFFA) traverse the membrane as a helical segment. Residues 442 to 460 (FFAKKLYLLKTENTKLRRT) are interaction with GOPC. Residues 445–566 (KKLYLLKTEN…GVNCLQNNLT (122 aa)) are Cytoplasmic-facing. A phosphoserine mark is found at S467, S475, and S477. Phosphothreonine is present on T478. A phosphoserine mark is found at S483 and S543. The segment at 531 to 566 (KEEESFNIQNSMSPKLEGGKGDQDDLGVNCLQNNLT) is disordered.

Binds TNR and probably TNC. Interacts with ERBB3 and GOPC. Interacts with MDK; this interaction is independent of the presence of chondroitin sulfate chains and promotes elongation of oligodendroglial precursor-like cells. In terms of processing, N-glycosylated. O-glycosylated; contains chondroitin sulfate glycans. Part-time proteoglycan, expressed in part as a proteoglycan exhibiting chondroitin sulfate glycans and in part as a non-proteoglycan form. The relative amount of both forms depends on tissues and tissue maturation. In the cerebellum the 2 forms coexist while in the cerebrum the proteoglycan form is predominant. Post-translationally, phosphorylated; in intracellular and extracellular parts. As to expression, expressed in olfactory bulb, hippocampus, brain stem, spinal cord, cerebrum and cerebellum. Expressed by Purkinje cells in the cerebellum (at protein level). Expressed in immature and mature cerebellum (isoform 1, isoform 2 and isoform 3).

Its subcellular location is the cell membrane. The protein resides in the synaptic cell membrane. It localises to the endoplasmic reticulum membrane. It is found in the golgi apparatus membrane. The protein localises to the cell surface. Its subcellular location is the secreted. Its function is as follows. May function as a growth and differentiation factor involved in neuritogenesis. May induce ERBB3 activation. In Mus musculus (Mouse), this protein is Chondroitin sulfate proteoglycan 5 (Cspg5).